The chain runs to 70 residues: MKKDIHPKYDFITANCSCGNAIKIRSTVGHDLNLDVCGQCHPFYTGKQRDVATGGRVDRFNKRFSIPGAK.

The Zn(2+) site is built by cysteine 16, cysteine 18, cysteine 37, and cysteine 40.

Belongs to the bacterial ribosomal protein bL31 family. Type A subfamily. Part of the 50S ribosomal subunit. Zn(2+) serves as cofactor.

In terms of biological role, binds the 23S rRNA. The polypeptide is Large ribosomal subunit protein bL31 (Enterobacter sp. (strain 638)).